Reading from the N-terminus, the 249-residue chain is 2,3-bisphosphoglycerate-dependent phosphoglycerate mutase (249 aa).

Residues 8 to 15 (RHGESVWN), 21 to 22 (TG), R60, 87 to 90 (ERHY), K98, 114 to 115 (RR), and 183 to 184 (GN) contribute to the substrate site. Residue H9 is the Tele-phosphohistidine intermediate of the active site. E87 acts as the Proton donor/acceptor in catalysis.

This sequence belongs to the phosphoglycerate mutase family. BPG-dependent PGAM subfamily.

The enzyme catalyses (2R)-2-phosphoglycerate = (2R)-3-phosphoglycerate. It participates in carbohydrate degradation; glycolysis; pyruvate from D-glyceraldehyde 3-phosphate: step 3/5. In terms of biological role, catalyzes the interconversion of 2-phosphoglycerate and 3-phosphoglycerate. This chain is 2,3-bisphosphoglycerate-dependent phosphoglycerate mutase, found in Endomicrobium trichonymphae.